The chain runs to 416 residues: Lipoyl synthase, mitochondrial (416 aa).

Residues Met1–Tyr33 constitute a mitochondrion transit peptide. The segment at Leu20–Thr52 is disordered. Low complexity predominate over residues Thr29 to Pro46. Residues Cys133, Cys138, Cys144, Cys164, Cys168, Cys171, and Ser379 each contribute to the [4Fe-4S] cluster site. Positions Gly147 to Leu368 constitute a Radical SAM core domain.

Belongs to the radical SAM superfamily. Lipoyl synthase family. [4Fe-4S] cluster serves as cofactor.

The protein localises to the mitochondrion. It carries out the reaction [[Fe-S] cluster scaffold protein carrying a second [4Fe-4S](2+) cluster] + N(6)-octanoyl-L-lysyl-[protein] + 2 oxidized [2Fe-2S]-[ferredoxin] + 2 S-adenosyl-L-methionine + 4 H(+) = [[Fe-S] cluster scaffold protein] + N(6)-[(R)-dihydrolipoyl]-L-lysyl-[protein] + 4 Fe(3+) + 2 hydrogen sulfide + 2 5'-deoxyadenosine + 2 L-methionine + 2 reduced [2Fe-2S]-[ferredoxin]. It participates in protein modification; protein lipoylation via endogenous pathway; protein N(6)-(lipoyl)lysine from octanoyl-[acyl-carrier-protein]: step 2/2. In terms of biological role, catalyzes the radical-mediated insertion of two sulfur atoms into the C-6 and C-8 positions of the octanoyl moiety bound to the lipoyl domains of lipoate-dependent enzymes, thereby converting the octanoylated domains into lipoylated derivatives. This is Lipoyl synthase, mitochondrial from Aspergillus niger (strain ATCC MYA-4892 / CBS 513.88 / FGSC A1513).